Consider the following 379-residue polypeptide: Diaminopimelate decarboxylase (379 aa).

Residue Lys48 is modified to N6-(pyridoxal phosphate)lysine. Pyridoxal 5'-phosphate-binding positions include Gly214 and 242–245 (EPGR). Arg245, Arg280, and Tyr284 together coordinate substrate. Residue Cys309 is the Proton donor of the active site. Residues Glu310 and Tyr338 each contribute to the substrate site. Pyridoxal 5'-phosphate is bound at residue Tyr338.

This sequence belongs to the Orn/Lys/Arg decarboxylase class-II family. LysA subfamily. In terms of assembly, homodimer. It depends on pyridoxal 5'-phosphate as a cofactor.

The enzyme catalyses meso-2,6-diaminopimelate + H(+) = L-lysine + CO2. It participates in amino-acid biosynthesis; L-lysine biosynthesis via DAP pathway; L-lysine from DL-2,6-diaminopimelate: step 1/1. In terms of biological role, specifically catalyzes the decarboxylation of meso-diaminopimelate (meso-DAP) to L-lysine. The chain is Diaminopimelate decarboxylase from Deinococcus radiodurans (strain ATCC 13939 / DSM 20539 / JCM 16871 / CCUG 27074 / LMG 4051 / NBRC 15346 / NCIMB 9279 / VKM B-1422 / R1).